The following is a 564-amino-acid chain: Pyranose 2-oxidase (564 aa).

A propeptide spanning residues 1-25 (MPIRLSKEKINDLLQRSQGDLTSSQ) is cleaved from the precursor. His158 carries the tele-8alpha-FAD histidine modification. The substrate site is built by Gln392 and His394. His498 acts as the Proton acceptor in catalysis. Asn541 is an active-site residue.

Belongs to the GMC oxidoreductase family. As to quaternary structure, homotetramer. FAD serves as cofactor.

It catalyses the reaction D-glucose + O2 = 2-dehydro-D-glucose + H2O2. Its function is as follows. Catalyzes the oxidation of various aldopyranoses and disaccharides on carbon-2 to the corresponding 2-keto sugars concomitant with the reduction of O(2) to H(2)O(2). The preferred substrate is D-glucose which is converted to 2-dehydro-D-glucose. Acts also on D-xylose, L-sorbose, D-galactose and 1,5-anhydroglucitol, a diagnostic marker of diabetes mellitus. The chain is Pyranose 2-oxidase (p2ox) from Tricholoma matsutake (Matsutake mushroom).